The primary structure comprises 668 residues: Alpha-1,4-glucan:maltose-1-phosphate maltosyltransferase (668 aa).

The interval 263–288 is disordered; sequence RKGRNNSLTPAPDDPGSPYAIGSEEG. Alpha-maltose 1-phosphate contacts are provided by Lys264, Gln324, and Asp359. Asp395 acts as the Nucleophile in catalysis. Residue Asn396 coordinates alpha-maltose 1-phosphate. The Proton donor role is filled by Glu424. Residue 535–536 participates in alpha-maltose 1-phosphate binding; that stretch reads KY.

This sequence belongs to the glycosyl hydrolase 13 family. GlgE subfamily. Homodimer.

The catalysed reaction is alpha-maltose 1-phosphate + [(1-&gt;4)-alpha-D-glucosyl](n) = [(1-&gt;4)-alpha-D-glucosyl](n+2) + phosphate. Its function is as follows. Maltosyltransferase that uses maltose 1-phosphate (M1P) as the sugar donor to elongate linear or branched alpha-(1-&gt;4)-glucans. Is involved in a branched alpha-glucan biosynthetic pathway from trehalose, together with TreS, Mak and GlgB. This Cereibacter sphaeroides (strain ATCC 17023 / DSM 158 / JCM 6121 / CCUG 31486 / LMG 2827 / NBRC 12203 / NCIMB 8253 / ATH 2.4.1.) (Rhodobacter sphaeroides) protein is Alpha-1,4-glucan:maltose-1-phosphate maltosyltransferase.